The primary structure comprises 149 residues: Large ribosomal subunit protein bL20m (149 aa).

Residues 1–9 (MVFLTTRLW) constitute a mitochondrion transit peptide.

Belongs to the bacterial ribosomal protein bL20 family. In terms of assembly, component of the mitochondrial ribosome large subunit (39S) which comprises a 16S rRNA and about 50 distinct proteins. Interacts with OXA1L.

It localises to the mitochondrion. The protein is Large ribosomal subunit protein bL20m (Mrpl20) of Mus musculus (Mouse).